Consider the following 491-residue polypeptide: Protein nucleotidyltransferase YdiU (491 aa).

8 residues coordinate ATP: Gly88, Gly90, Arg91, Lys111, Asp123, Gly124, Arg174, and Arg181. Asp250 serves as the catalytic Proton acceptor. Mg(2+) contacts are provided by Asn251 and Asp260. Asp260 is a binding site for ATP.

It belongs to the SELO family. Requires Mg(2+) as cofactor. It depends on Mn(2+) as a cofactor.

It carries out the reaction L-seryl-[protein] + ATP = 3-O-(5'-adenylyl)-L-seryl-[protein] + diphosphate. The enzyme catalyses L-threonyl-[protein] + ATP = 3-O-(5'-adenylyl)-L-threonyl-[protein] + diphosphate. It catalyses the reaction L-tyrosyl-[protein] + ATP = O-(5'-adenylyl)-L-tyrosyl-[protein] + diphosphate. The catalysed reaction is L-histidyl-[protein] + UTP = N(tele)-(5'-uridylyl)-L-histidyl-[protein] + diphosphate. It carries out the reaction L-seryl-[protein] + UTP = O-(5'-uridylyl)-L-seryl-[protein] + diphosphate. The enzyme catalyses L-tyrosyl-[protein] + UTP = O-(5'-uridylyl)-L-tyrosyl-[protein] + diphosphate. Functionally, nucleotidyltransferase involved in the post-translational modification of proteins. It can catalyze the addition of adenosine monophosphate (AMP) or uridine monophosphate (UMP) to a protein, resulting in modifications known as AMPylation and UMPylation. The chain is Protein nucleotidyltransferase YdiU from Bradyrhizobium diazoefficiens (strain JCM 10833 / BCRC 13528 / IAM 13628 / NBRC 14792 / USDA 110).